The chain runs to 64 residues: Conotoxin Mr3.5 (64 aa).

The signal sequence occupies residues 1 to 19; the sequence is MSKLGVLLTICLLLFPLTA. The propeptide occupies 20-46; that stretch reads LPLDGDQPADQRAERTQAEKHSLPDPR. Disulfide bonds link cysteine 49-cysteine 58, cysteine 50-cysteine 62, and cysteine 54-cysteine 63. Cysteine 63 is modified (cysteine amide).

This sequence belongs to the conotoxin M superfamily. As to expression, expressed by the venom duct.

It localises to the secreted. The chain is Conotoxin Mr3.5 from Conus marmoreus (Marble cone).